A 276-amino-acid polypeptide reads, in one-letter code: Caspase-6 (276 aa).

Positions 1–5 (MTETD) are excised as a propeptide. A tri-arginine exosite region spans residues 25–27 (KRR). Phosphoserine is present on Ser-62. The active site involves His-104. The 130's region stretch occupies residues 108–125 (NHVYAYDAKIEIQTLTGL). Residue Cys-146 is part of the active site. Positions 163–175 (HQTDKLDNVTQVD) are excised as a propeptide. Ser-239 is subject to Phosphoserine. Residues Cys-246 and Cys-259 are each lipidated (S-palmitoyl cysteine).

The protein belongs to the peptidase C14A family. In terms of assembly, heterotetramer that consists of two anti-parallel arranged heterodimers, each one formed by a 18 kDa (p18) and a 11 kDa (p11) subunit. Interacts with BIRC6/bruce. Interacts with RIPK3. Heterotetramer that consists of two anti-parallel arranged heterodimers, each one formed by a 18 kDa (Caspase-6 subunit p18) and a 11 kDa (Caspase-6 subunit p11) subunit. In terms of processing, phosphorylated by NUAK1; phosphorylation inhibits self-activation. Phosphorylation at Ser-239 by AMP-activated protein kinase (PRKAA1 or PRKAA2) inhibits autocleavage, preventing caspase activation, thereby preventing hepatocyte apoptosis. Post-translationally, palmitoylation by ZDHHC17 blocks dimerization and subsequent activation, leading to inhibit the cysteine protease activity. Can be cleaved and activated by different caspases, depending on the context. Cleaved and activated by caspase-8 (CASP8) and subsequently by caspase-3 (CASP3). Can also undergo autoactivation by mediating autocleavage at Asp-162 and Asp-175, while it is not able to cleave its N-terminal disordered prodomain. Cleaved and activated by CASP1, possibly in the context of inflammation. In terms of tissue distribution, highly expressed in lung, liver, kidney, testis, and heart. Lower levels in spleen, skeletal muscle and brain. Expressed in neurons.

The protein resides in the cytoplasm. Its subcellular location is the nucleus. The enzyme catalyses Strict requirement for Asp at position P1 and has a preferred cleavage sequence of Val-Glu-His-Asp-|-.. With respect to regulation, during activation, the N-terminal disordered prodomain is removed by cleavage. Concomitantly, double cleavage gives rise to a large 18-kDa and a small 11-kDa subunit. The two large and two small subunits then assemble to form the active CASP6 complex. Can be cleaved and activated by different caspases, depending on the context. Cleaved and activated by caspase-8 (CASP8) and subsequently by caspase-3 (CASP3). Can also undergo autoactivation by mediating autocleavage at Asp-162 and Asp-175, while it is not able to cleave its N-terminal disordered prodomain. Intramolecular cleavage at Asp-175 is a prerequisite for CASP6 self-activation. Cleaved and activated by CASP1 in neurons, possibly in the context of inflammation. Phosphorylation at Ser-239 inhibits autocleavage, preventing caspase activation. Its function is as follows. Cysteine protease that plays essential roles in programmed cell death, axonal degeneration, development and innate immunity. Acts as a non-canonical executioner caspase during apoptosis: localizes in the nucleus and cleaves the nuclear structural protein NUMA1 and lamin A/LMNA thereby inducing nuclear shrinkage and fragmentation. Lamin-A/LMNA cleavage is required for chromatin condensation and nuclear disassembly during apoptotic execution. Acts as a regulator of liver damage by promoting hepatocyte apoptosis: in absence of phosphorylation by AMP-activated protein kinase (AMPK), catalyzes cleavage of BID, leading to cytochrome c release, thereby participating in nonalcoholic steatohepatitis. Cleaves PARK7/DJ-1 in cells undergoing apoptosis. Involved in intrinsic apoptosis by mediating cleavage of RIPK1. Furthermore, cleaves many transcription factors such as NF-kappa-B and cAMP response element-binding protein/CREBBP. Cleaves phospholipid scramblase proteins XKR4 and XKR9. In addition to apoptosis, involved in different forms of programmed cell death. Plays an essential role in defense against viruses by acting as a central mediator of the ZBP1-mediated pyroptosis, apoptosis, and necroptosis (PANoptosis), independently of its cysteine protease activity. PANoptosis is a unique inflammatory programmed cell death, which provides a molecular scaffold that allows the interactions and activation of machinery required for inflammasome/pyroptosis, apoptosis and necroptosis. Mechanistically, interacts with RIPK3 and enhances the interaction between RIPK3 and ZBP1, leading to ZBP1-mediated inflammasome activation and cell death. Plays an essential role in axon degeneration during axon pruning which is the remodeling of axons during neurogenesis but not apoptosis. Regulates B-cell programs both during early development and after antigen stimulation. Functionally, (Microbial infection) Proteolytically cleaves the N protein of coronaviruses. The cleavage leads to two fragments and modulates coronavirus replication by regulating IFN signaling. The two fragments produced by the cleavage interact with IRF3 inhibiting its nuclear translocation after activation and reduce the expression of IFNB and IFN-stimulated genes. The sequence is that of Caspase-6 from Mus musculus (Mouse).